Consider the following 243-residue polypeptide: Chalcone--flavanone isomerase (243 aa).

Positions 50, 115, and 192 each coordinate substrate.

It belongs to the chalcone isomerase family.

The catalysed reaction is a chalcone = a flavanone.. It functions in the pathway secondary metabolite biosynthesis; flavonoid biosynthesis. Functionally, catalyzes the intramolecular cyclization of bicyclic chalcones into tricyclic (S)-flavanones. Responsible for the isomerization of 4,2',4',6'-tetrahydroxychalcone (also termed chalcone) into naringenin. The polypeptide is Chalcone--flavanone isomerase (CHI) (Ipomoea batatas (Sweet potato)).